Consider the following 354-residue polypeptide: Tryptophan--tRNA ligase (354 aa).

Residues Gln-13–Thr-15 and Gly-21–Asn-22 each bind ATP. Positions Pro-14–Asn-22 match the 'HIGH' region motif. Asp-137 is an L-tryptophan binding site. ATP-binding positions include Gly-149 to Asp-151, Val-208, and Lys-217 to Ser-221. Residues Lys-217–Ser-221 carry the 'KMSKS' region motif.

This sequence belongs to the class-I aminoacyl-tRNA synthetase family. In terms of assembly, homodimer.

The protein resides in the cytoplasm. It carries out the reaction tRNA(Trp) + L-tryptophan + ATP = L-tryptophyl-tRNA(Trp) + AMP + diphosphate + H(+). Functionally, catalyzes the attachment of tryptophan to tRNA(Trp). The protein is Tryptophan--tRNA ligase of Rhizobium meliloti (strain 1021) (Ensifer meliloti).